The primary structure comprises 442 residues: D-serine dehydratase 1 (442 aa).

K118 is modified (N6-(pyridoxal phosphate)lysine).

This sequence belongs to the serine/threonine dehydratase family. DsdA subfamily. In terms of assembly, monomer. Pyridoxal 5'-phosphate serves as cofactor.

The catalysed reaction is D-serine = pyruvate + NH4(+). This Escherichia coli (strain UTI89 / UPEC) protein is D-serine dehydratase 1.